The chain runs to 378 residues: Ribosomal RNA large subunit methyltransferase G (378 aa).

It belongs to the methyltransferase superfamily. RlmG family.

It is found in the cytoplasm. It carries out the reaction guanosine(1835) in 23S rRNA + S-adenosyl-L-methionine = N(2)-methylguanosine(1835) in 23S rRNA + S-adenosyl-L-homocysteine + H(+). Specifically methylates the guanine in position 1835 (m2G1835) of 23S rRNA. This chain is Ribosomal RNA large subunit methyltransferase G, found in Escherichia coli (strain ATCC 8739 / DSM 1576 / NBRC 3972 / NCIMB 8545 / WDCM 00012 / Crooks).